We begin with the raw amino-acid sequence, 181 residues long: Ras-like protein 1 (181 aa).

Position 10–17 (10–17 (GAGGVGKS)) interacts with GTP. Residues 32 to 40 (YDPTIEDSY) carry the Effector region motif. GTP is bound by residues 57–61 (DTAGQ) and 116–119 (NKCD). Cysteine 178 carries the post-translational modification Cysteine methyl ester. Residue cysteine 178 is the site of S-geranylgeranyl cysteine attachment. The propeptide at 179-181 (KML) is removed in mature form.

This sequence belongs to the small GTPase superfamily. Ras family.

It is found in the cell membrane. It carries out the reaction GTP + H2O = GDP + phosphate + H(+). With respect to regulation, alternates between an inactive form bound to GDP and an active form bound to GTP. Activated by a guanine nucleotide-exchange factor (GEF) and inactivated by a GTPase-activating protein (GAP). Ras proteins bind GDP/GTP and possess intrinsic GTPase activity. Plays a role in eye development by regulating cell growth, survival of postmitotic ommatidial cells and differentiation of photoreceptor cells. During larval development, mediates Ptth/tor signaling leading to the production of ecdysone, a hormone required for the initiation of metamorphosis. This is Ras-like protein 1 from Drosophila mojavensis (Fruit fly).